Consider the following 433-residue polypeptide: Probable glycine dehydrogenase (decarboxylating) subunit 1 (433 aa).

This sequence belongs to the GcvP family. N-terminal subunit subfamily. As to quaternary structure, the glycine cleavage system is composed of four proteins: P, T, L and H. In this organism, the P 'protein' is a heterodimer of two subunits.

It carries out the reaction N(6)-[(R)-lipoyl]-L-lysyl-[glycine-cleavage complex H protein] + glycine + H(+) = N(6)-[(R)-S(8)-aminomethyldihydrolipoyl]-L-lysyl-[glycine-cleavage complex H protein] + CO2. In terms of biological role, the glycine cleavage system catalyzes the degradation of glycine. The P protein binds the alpha-amino group of glycine through its pyridoxal phosphate cofactor; CO(2) is released and the remaining methylamine moiety is then transferred to the lipoamide cofactor of the H protein. In Thermoplasma acidophilum (strain ATCC 25905 / DSM 1728 / JCM 9062 / NBRC 15155 / AMRC-C165), this protein is Probable glycine dehydrogenase (decarboxylating) subunit 1.